The chain runs to 406 residues: Argininosuccinate synthase (406 aa).

ATP contacts are provided by residues alanine 11–serine 19 and alanine 38. Residues tyrosine 91 and serine 96 each contribute to the L-citrulline site. Glycine 121 is an ATP binding site. L-aspartate is bound by residues threonine 123, asparagine 127, and aspartate 128. L-citrulline is bound at residue asparagine 127. Residues arginine 131, serine 181, serine 190, glutamate 266, and tyrosine 278 each contribute to the L-citrulline site.

This sequence belongs to the argininosuccinate synthase family. Type 1 subfamily. As to quaternary structure, homotetramer.

Its subcellular location is the cytoplasm. It carries out the reaction L-citrulline + L-aspartate + ATP = 2-(N(omega)-L-arginino)succinate + AMP + diphosphate + H(+). It participates in amino-acid biosynthesis; L-arginine biosynthesis; L-arginine from L-ornithine and carbamoyl phosphate: step 2/3. The protein is Argininosuccinate synthase of Campylobacter hominis (strain ATCC BAA-381 / DSM 21671 / CCUG 45161 / LMG 19568 / NCTC 13146 / CH001A).